A 199-amino-acid polypeptide reads, in one-letter code: uncharacterized protein (199 aa).

3 helical membrane passes run 27–47, 55–75, and 172–192; these read LIKI…PILA, LLTL…VAAL, and LLLL…VLLL.

Its subcellular location is the cell membrane. This is an uncharacterized protein from Synechocystis sp. (strain ATCC 27184 / PCC 6803 / Kazusa).